The primary structure comprises 274 residues: MATSVIKSWADAEDEIPAAEVINNPDGTKTVINYRMNANGQKIRHIQKIREVKVKEKVHPLIAMRKNWSKYGKEKDMPAGPDARTTQLGEVVELKLGTSWKEIEKEEEEQKAEQTQQIVSNQRIKCRTCGGNHFTSKCPFKDTLISDSANTSAAATPEPDTDASGKYVPPSLRKGAGAVRDMSGRDRDDSTTLKISQLNTFVDEDMLRNELLKRFHPLQRVTIVRNRETGESRGFAYVSFVTERQAEEALNTLNGKGYHSLILHLEWPKKRKAN.

Phosphoserine occurs at positions 146, 164, and 171. Residues 149–170 (ANTSAAATPEPDTDASGKYVPP) form a disordered region. In terms of domain architecture, RRM spans 191–270 (TTLKISQLNT…LILHLEWPKK (80 aa)).

This sequence belongs to the eIF-3 subunit G family. In terms of assembly, component of the eukaryotic translation initiation factor 3 (eIF-3) complex.

The protein resides in the cytoplasm. In terms of biological role, RNA-binding component of the eukaryotic translation initiation factor 3 (eIF-3) complex, which is involved in protein synthesis of a specialized repertoire of mRNAs and, together with other initiation factors, stimulates binding of mRNA and methionyl-tRNAi to the 40S ribosome. The eIF-3 complex specifically targets and initiates translation of a subset of mRNAs involved in cell proliferation. This subunit can bind 18S rRNA. This Meyerozyma guilliermondii (strain ATCC 6260 / CBS 566 / DSM 6381 / JCM 1539 / NBRC 10279 / NRRL Y-324) (Yeast) protein is Eukaryotic translation initiation factor 3 subunit G.